Here is a 380-residue protein sequence, read N- to C-terminus: Growth-regulating factor 4 (380 aa).

Positions 1–21 are disordered; the sequence is MDLQLKQWRSQQQNESEEQGS. The region spanning 82-117 is the QLQ domain; that stretch reads FFSWAQWQELELQALIYRYMLAGASVPQELLLPIKK. One can recognise a WRC domain in the interval 151–195; that stretch reads DPEPGRCKRTDGKKWRCSRDVVAGHKYCDRHIHRGRNRSRKPVET. Short sequence motifs (bipartite nuclear localization signal) lie at residues 156 to 166 and 184 to 191; these read RCKRTDGKKWR and RGRNRSRK. Disordered stretches follow at residues 222–270 and 284–330; these read NNNH…GRSD and RSSD…NMRN. 2 stretches are compositionally biased toward low complexity: residues 228 to 245 and 285 to 296; these read SSGS…SCSS and SSDSTSSPMSSS. Over residues 297–320 the composition is skewed to polar residues; that stretch reads TCHLSISMPGNNTSSDVSLKLSTG.

It belongs to the GRF family. In terms of tissue distribution, strongly expressed in actively growing and developing tissues, such as roots, upper stems, and shoot tips containing the shoot apical meristem (SAM) and flower buds. Also expressed in mature flowers, but weakly expressed in mature stems and leaves.

The protein localises to the nucleus. In terms of biological role, transcription activator that plays a role in the regulation of cell expansion in leaf and cotyledons tissues. Component of a network formed by miR396, the GRFs and their interacting factors (GIFs) acting in the regulation of meristem function, at least partially through the control of cell proliferation. This chain is Growth-regulating factor 4 (GRF4), found in Arabidopsis thaliana (Mouse-ear cress).